The sequence spans 81 residues: Cytochrome b559 subunit alpha (81 aa).

Residues 21 to 35 (VIHSITIPSLFVSGW) form a helical membrane-spanning segment. Heme is bound at residue histidine 23.

The protein belongs to the PsbE/PsbF family. As to quaternary structure, heterodimer of an alpha subunit and a beta subunit. PSII is composed of 1 copy each of membrane proteins PsbA, PsbB, PsbC, PsbD, PsbE, PsbF, PsbH, PsbI, PsbJ, PsbK, PsbL, PsbM, PsbT, PsbX, PsbY, PsbZ, Psb30/Ycf12, at least 3 peripheral proteins of the oxygen-evolving complex and a large number of cofactors. It forms dimeric complexes. Heme b serves as cofactor.

Its subcellular location is the plastid. The protein localises to the chloroplast thylakoid membrane. This b-type cytochrome is tightly associated with the reaction center of photosystem II (PSII). PSII is a light-driven water:plastoquinone oxidoreductase that uses light energy to abstract electrons from H(2)O, generating O(2) and a proton gradient subsequently used for ATP formation. It consists of a core antenna complex that captures photons, and an electron transfer chain that converts photonic excitation into a charge separation. In Mesostigma viride (Green alga), this protein is Cytochrome b559 subunit alpha.